Reading from the N-terminus, the 268-residue chain is DNA ligase (268 aa).

Catalysis depends on Lys-41, which acts as the N6-AMP-lysine intermediate. Positions 111, 181, and 187 each coordinate ATP.

It belongs to the ATP-dependent DNA ligase family. It depends on a divalent metal cation as a cofactor.

It catalyses the reaction ATP + (deoxyribonucleotide)n-3'-hydroxyl + 5'-phospho-(deoxyribonucleotide)m = (deoxyribonucleotide)n+m + AMP + diphosphate.. Catalyzes efficient strand joining on a single nicked DNA. This chain is DNA ligase (ligA), found in Haemophilus influenzae (strain ATCC 51907 / DSM 11121 / KW20 / Rd).